A 723-amino-acid polypeptide reads, in one-letter code: Probable alpha-fucosidase A (723 aa).

The first 15 residues, 1 to 15 (MRSLVLLGMSSLATA), serve as a signal peptide directing secretion. Residues Asn77, Asn98, Asn117, Asn171, Asn194, Asn243, Asn334, Asn558, Asn566, and Asn595 are each glycosylated (N-linked (GlcNAc...) asparagine).

The protein belongs to the glycosyl hydrolase 95 family.

The protein localises to the secreted. It carries out the reaction an alpha-L-fucoside + H2O = L-fucose + an alcohol. Alpha-fucosidase involved in degradation of fucosylated xyloglucans. Hydrolyzes alpha-1,2-linked fucose. The sequence is that of Probable alpha-fucosidase A (afcA) from Aspergillus oryzae (strain ATCC 42149 / RIB 40) (Yellow koji mold).